The primary structure comprises 559 residues: Malate synthase, glyoxysomal (559 aa).

R173 serves as the catalytic Proton acceptor. D459 functions as the Proton donor in the catalytic mechanism. Positions 557-559 match the Microbody targeting signal motif; the sequence is CKL.

The protein belongs to the malate synthase family.

The protein localises to the glyoxysome. The enzyme catalyses glyoxylate + acetyl-CoA + H2O = (S)-malate + CoA + H(+). The protein operates within carbohydrate metabolism; glyoxylate cycle; (S)-malate from isocitrate: step 2/2. In Zea mays (Maize), this protein is Malate synthase, glyoxysomal (LIP).